A 625-amino-acid polypeptide reads, in one-letter code: DELLA protein SLR1 (625 aa).

The disordered stretch occupies residues 1-34 (MKREYQEAGGSSGGGSSADMGSCKDKVMAGAAGE). Positions 39–43 (DELLA) match the DELLA motif motif. A disordered region spans residues 167 to 208 (TADPSAADSARDTKRMRTGGGSTSSSSSSSSSLGGGASRGSV). Over residues 189–198 (TSSSSSSSSS) the composition is skewed to low complexity. Positions 232–621 (VDTQEAGIRL…RPLIATSAWR (390 aa)) constitute a GRAS domain. The interval 239 to 294 (IRLVHALLACAEAVQQENFAAAEALVKQIPTLAASQGGAMRKVAAYFGEALARRVY) is leucine repeat I (LRI). Positions 241–278 (LVHALLACAEAVQQENFAAAEALVKQIPTLAASQGGAM) are required for possible homodimerization. Positions 246–250 (LACAE) match the LxCxE motif motif. The VHIID stretch occupies residues 313-378 (HAHFYESCPY…GGPPSFRLTG (66 aa)). Residues 344–348 (VHVVD) carry the VHIID motif. Positions 392–431 (QVGWKLAQFAHTIRVDFQYRGLVAATLADLEPFMLQPEGE) are leucine repeat II (LRII). Positions 441-542 (IAVNSVFELH…EVYLGRQICN (102 aa)) are PFYRE. Positions 449–453 (LHRLL) match the LXXLL motif motif. The segment at 545–621 (ACEGAERTER…RPLIATSAWR (77 aa)) is SAW.

This sequence belongs to the GRAS family. DELLA subfamily.

Probable transcriptional regulator that acts as a repressor of the gibberellin (GA) signaling pathway. Probably acts by participating in large multiprotein complexes that repress transcription of GA-inducible genes. Upon GA application, it is degraded by the proteasome, allowing the GA signaling pathway. In contrast, its overexpression prevents the GA signaling pathway and induces a dwarf phenotype. The chain is DELLA protein SLR1 from Oryza sativa subsp. indica (Rice).